Reading from the N-terminus, the 112-residue chain is Beta-defensin 126 (112 aa).

A signal peptide spans 1–20 (MKSLLFTLAVFMLLAQLVSG). Residues 21-63 (NWYVKKCLNDVGICKKKCKPEELHVKNGRAMCGKQRDCCVPAD) form an in vitro binds to LPS, mediates antimicrobial activity and inhibits LPS-mediated inflammation region. Intrachain disulfides connect Cys-27–Cys-58, Cys-34–Cys-52, and Cys-38–Cys-59.

This sequence belongs to the beta-defensin family. In terms of assembly, homodimer or homooligomer; disulfide-linked. In terms of processing, O-glycosylated; glycans contain alpha(2,3)-linked sialic acids.

The protein localises to the secreted. In terms of biological role, highly glycosylated atypical beta-defensin involved in several aspects of sperm function. Facilitates sperm transport in the female reproductive tract and contributes to sperm protection against immunodetection; both functions are probably implicating the negative surface charge provided by its O-linked oligosaccharides in the sperm glycocalyx. Involved in binding of sperm to oviductal epithelial cells to form a sperm reservoir until ovulation. Release from the sperm surface during capacitation and ovaluation by an elevation of oviductal fluid pH is unmasking other surface components and allows sperm to penetrate the cumulus matrix and bind to the zona pellucida of the oocyte. In vitro has antimicrobial activity and may inhibit LPS-mediated inflammation. This chain is Beta-defensin 126 (DEFB126), found in Hylobates lar (Lar gibbon).